Consider the following 277-residue polypeptide: Digeranylgeranylglyceryl phosphate synthase (277 aa).

The next 8 membrane-spanning stretches (helical) occupy residues 16–36 (LLAGIVGVLGSIVAAGGLPEL), 40–60 (ILVFLVVFLGCAGGNTINDYF), 83–105 (AALWYSVALFATGIVLAWFINIW), 107–124 (FLLAIVAYVTMFIYAWKL), 146–166 (GAIAVGEIGLAGTLALCAFLV), 202–222 (VGALFAILTVVASFLPIKAGI), 224–244 (LGYLAMLPVDAVILYSAFLIL), and 256–276 (QILLKVSVFLAVVAFLIASLV).

Belongs to the UbiA prenyltransferase family. DGGGP synthase subfamily. Mg(2+) is required as a cofactor.

It localises to the cell membrane. The enzyme catalyses sn-3-O-(geranylgeranyl)glycerol 1-phosphate + (2E,6E,10E)-geranylgeranyl diphosphate = 2,3-bis-O-(geranylgeranyl)-sn-glycerol 1-phosphate + diphosphate. The protein operates within membrane lipid metabolism; glycerophospholipid metabolism. In terms of biological role, prenyltransferase that catalyzes the transfer of the geranylgeranyl moiety of geranylgeranyl diphosphate (GGPP) to the C2 hydroxyl of (S)-3-O-geranylgeranylglyceryl phosphate (GGGP). This reaction is the second ether-bond-formation step in the biosynthesis of archaeal membrane lipids. The chain is Digeranylgeranylglyceryl phosphate synthase from Thermococcus kodakarensis (strain ATCC BAA-918 / JCM 12380 / KOD1) (Pyrococcus kodakaraensis (strain KOD1)).